A 262-amino-acid chain; its full sequence is Pyridoxine 5'-phosphate synthase (262 aa).

A 3-amino-2-oxopropyl phosphate-binding site is contributed by asparagine 6. 8–9 (DH) serves as a coordination point for 1-deoxy-D-xylulose 5-phosphate. 3-amino-2-oxopropyl phosphate is bound at residue arginine 17. Residue histidine 42 is the Proton acceptor of the active site. 1-deoxy-D-xylulose 5-phosphate contacts are provided by arginine 44 and histidine 49. Residue glutamate 69 is the Proton acceptor of the active site. Threonine 99 serves as a coordination point for 1-deoxy-D-xylulose 5-phosphate. The active-site Proton donor is the histidine 213. Residues glycine 214 and 235 to 236 (GH) contribute to the 3-amino-2-oxopropyl phosphate site.

The protein belongs to the PNP synthase family. In terms of assembly, homooctamer; tetramer of dimers.

Its subcellular location is the cytoplasm. The catalysed reaction is 3-amino-2-oxopropyl phosphate + 1-deoxy-D-xylulose 5-phosphate = pyridoxine 5'-phosphate + phosphate + 2 H2O + H(+). It functions in the pathway cofactor biosynthesis; pyridoxine 5'-phosphate biosynthesis; pyridoxine 5'-phosphate from D-erythrose 4-phosphate: step 5/5. Functionally, catalyzes the complicated ring closure reaction between the two acyclic compounds 1-deoxy-D-xylulose-5-phosphate (DXP) and 3-amino-2-oxopropyl phosphate (1-amino-acetone-3-phosphate or AAP) to form pyridoxine 5'-phosphate (PNP) and inorganic phosphate. The polypeptide is Pyridoxine 5'-phosphate synthase (Wolinella succinogenes (strain ATCC 29543 / DSM 1740 / CCUG 13145 / JCM 31913 / LMG 7466 / NCTC 11488 / FDC 602W) (Vibrio succinogenes)).